Consider the following 65-residue polypeptide: Large ribosomal subunit protein bL35 (65 aa).

The protein belongs to the bacterial ribosomal protein bL35 family.

This is Large ribosomal subunit protein bL35 from Nitrosomonas eutropha (strain DSM 101675 / C91 / Nm57).